A 137-amino-acid polypeptide reads, in one-letter code: Large ribosomal subunit protein uL16 (137 aa).

This sequence belongs to the universal ribosomal protein uL16 family. As to quaternary structure, part of the 50S ribosomal subunit.

Binds 23S rRNA and is also seen to make contacts with the A and possibly P site tRNAs. The protein is Large ribosomal subunit protein uL16 of Pseudomonas paraeruginosa (strain DSM 24068 / PA7) (Pseudomonas aeruginosa (strain PA7)).